We begin with the raw amino-acid sequence, 206 residues long: Testis-expressed protein 38 (206 aa).

The helical transmembrane segment at 15–35 (VSLYFGILGLCSVITGGCIIF) threads the bilayer.

It localises to the membrane. This chain is Testis-expressed protein 38 (TEX38), found in Homo sapiens (Human).